Consider the following 303-residue polypeptide: Putative monooxygenase p33MONOX (303 aa).

Disordered regions lie at residues 1–20, 37–56, 66–96, 156–233, and 260–283; these read MASR…LGKM, LEDP…IPWK, HLDK…KAPV, KLQS…LQKS, and RVGE…GKKQ. A Phosphothreonine modification is found at Thr-44. A Flavin-containing monooxygenase motif motif is present at residues 67-77; that stretch reads LDKTEEGAASV. Over residues 76 to 89 the composition is skewed to polar residues; the sequence is SVSSLAVTPSPATD. Residues 170–183 are compositionally biased toward low complexity; sequence ASAQSTPSSTPHAS. Thr-175 carries the post-translational modification Phosphothreonine. Position 183 is a phosphoserine (Ser-183).

Belongs to the P33MONOX family. Interacts with NELFB, NOL12 and PRNP. As to expression, expressed in neuronal pyramidal cells of the hippocampus and in the neurons of the cortex.

It localises to the cytoplasm. Functionally, potential NADPH-dependent oxidoreductase. May be involved in the regulation of neuronal survival, differentiation and axonal outgrowth. This chain is Putative monooxygenase p33MONOX (P33monox), found in Mus musculus (Mouse).